Reading from the N-terminus, the 471-residue chain is Fructokinase-like 1, chloroplastic (471 aa).

The transit peptide at 1-38 (MASLLIFPHLHHFDSSLDRREVLVVRHSQASRRFLTPK) directs the protein to the chloroplast. The disordered stretch occupies residues 36–85 (TPKASINGSGITNGAAAETTSKPSRKGRKKKQTSTVIEKDNTETDPELNP). Residues 39–57 (ASINGSGITNGAAAETTSK) show a composition bias toward polar residues. The segment covering 58-67 (PSRKGRKKKQ) has biased composition (basic residues).

This sequence belongs to the carbohydrate kinase PfkB family. In terms of assembly, interacts with CITRX/TRXz. Interacts with PTAC7. Self-interacts. Binds to FLN2. Associates with the plastid-encoded RNA polymerase (PEP) complex.

It is found in the plastid. The protein resides in the chloroplast. Its function is as follows. Required for proper chloroplast development, most likely through regulating plastid-encoded polymerase (PEP) dependent chloroplast transcription. Acts as a component of the transcriptionally active plastid chromosome that is required for plastid gene expression. This Arabidopsis thaliana (Mouse-ear cress) protein is Fructokinase-like 1, chloroplastic.